The chain runs to 408 residues: Aspartate aminotransferase, cytoplasmic (408 aa).

L-aspartate is bound by residues G36, W133, and N187. K251 carries the post-translational modification N6-(pyridoxal phosphate)lysine. R379 serves as a coordination point for L-aspartate.

This sequence belongs to the class-I pyridoxal-phosphate-dependent aminotransferase family. Homodimer. Pyridoxal 5'-phosphate serves as cofactor. As to expression, expressed in all somatic tissues including the nervous system.

The protein localises to the cytoplasm. It catalyses the reaction L-aspartate + 2-oxoglutarate = oxaloacetate + L-glutamate. Its function is as follows. Biosynthesis of L-glutamate from L-aspartate. Important regulator of levels of glutamate, the major excitatory neurotransmitter of the central nervous system. In Caenorhabditis elegans, this protein is Aspartate aminotransferase, cytoplasmic.